A 346-amino-acid chain; its full sequence is DNA primase small subunit PriS (346 aa).

Active-site residues include aspartate 97, aspartate 99, and aspartate 278.

This sequence belongs to the eukaryotic-type primase small subunit family. As to quaternary structure, heterodimer of a small subunit (PriS) and a large subunit (PriL). Requires Mg(2+) as cofactor. Mn(2+) is required as a cofactor.

In terms of biological role, catalytic subunit of DNA primase, an RNA polymerase that catalyzes the synthesis of short RNA molecules used as primers for DNA polymerase during DNA replication. The small subunit contains the primase catalytic core and has DNA synthesis activity on its own. Binding to the large subunit stabilizes and modulates the activity, increasing the rate of DNA synthesis while decreasing the length of the DNA fragments, and conferring RNA synthesis capability. The DNA polymerase activity may enable DNA primase to also catalyze primer extension after primer synthesis. May also play a role in DNA repair. This is DNA primase small subunit PriS from Thermococcus onnurineus (strain NA1).